Consider the following 500-residue polypeptide: Lysine--tRNA ligase (500 aa).

Positions 410 and 417 each coordinate Mg(2+).

The protein belongs to the class-II aminoacyl-tRNA synthetase family. Homodimer. Mg(2+) serves as cofactor.

The protein localises to the cytoplasm. It catalyses the reaction tRNA(Lys) + L-lysine + ATP = L-lysyl-tRNA(Lys) + AMP + diphosphate. The sequence is that of Lysine--tRNA ligase from Shewanella amazonensis (strain ATCC BAA-1098 / SB2B).